Reading from the N-terminus, the 504-residue chain is MAAAAVVHLSVHGRLRRSPELHARPYHRPSLLRCRAFKQEADNGGEEASSSPPPPTTAEARRRRKGPLYKLKAAIQGLAGSRSAAAEAYGGEYQRAVEKAEEIFFSVATQVGRYVITMMSSGVVLGVGFQLSGGDSQMNTLIWYSWLGGVIIGTMIGANSVLEEHCKAGPRNVVITGSTRGLGKALAREFLLSGDRVVIASRSPESVLQTINELEENIQEGLSVAKKKQREILLHAKVVGTSCDVCKPEDVKKLVNFAKDELGSIDIWINNAGTNKGFRPLVNFSDEDISQIVSTNLVGSLLCTREAMNVMQHQQKGGHVFNMDGAGSGGSSTPLTAVYGSTKCGLRQFQASLLKESRRSKVGVHTASPGMVLTDLLLSGSSLRNKQMFNLICELPETVARTLVPRMRVVKGSGKAINYLTPPRILLALVTAWVRRGRWFDEEGRAVYAAEADRIRNWAESRARFSFTDAMEMYTENTWVSVFSLSVVCAFIILSSSGGPLPGT.

The N-terminal 33 residues, 1–33 (MAAAAVVHLSVHGRLRRSPELHARPYHRPSLLR), are a transit peptide targeting the chloroplast. Positions 41–63 (ADNGGEEASSSPPPPTTAEARRR) are disordered. 2 helical membrane-spanning segments follow: residues 114–134 (YVITMMSSGVVLGVGFQLSGG) and 141–161 (LIWYSWLGGVIIGTMIGANSV). Position 175–199 (175–199 (ITGSTRGLGKALAREFLLSGDRVVI)) interacts with NAD(+). Tyr-339 (proton acceptor) is an active-site residue. A helical membrane pass occupies residues 479 to 499 (WVSVFSLSVVCAFIILSSSGG).

The protein belongs to the short-chain dehydrogenases/reductases (SDR) family. Interacts with NOL to form a complex that acts as a chlorophyll b reductase. As to expression, expressed in leaves and stems. Also detected in non-photosynthetic tissues such as roots.

It localises to the plastid. The protein localises to the chloroplast thylakoid membrane. It carries out the reaction 7(1)-hydroxychlorophyllide a + NAD(+) = chlorophyllide b + NADH + H(+). The catalysed reaction is 7(1)-hydroxychlorophyllide a + NADP(+) = chlorophyllide b + NADPH + H(+). Its function is as follows. Required for proper chloroplast degradation. Involved in chlorophyll b degradation. The sequence is that of Probable chlorophyll(ide) b reductase NYC1, chloroplastic (NYC1) from Oryza sativa subsp. japonica (Rice).